Reading from the N-terminus, the 510-residue chain is Bifunctional pantoate ligase/cytidylate kinase (510 aa).

A pantoate--beta-alanine ligase region spans residues 1 to 276 (MNKIIIRKTE…CGKTRLIDHV (276 aa)). 29-36 (MGNLHDGH) is a binding site for ATP. The Proton donor role is filled by histidine 36. Glutamine 61 contributes to the (R)-pantoate binding site. Glutamine 61 lines the beta-alanine pocket. Position 150–153 (150–153 (GEKD)) interacts with ATP. Glutamine 156 serves as a coordination point for (R)-pantoate. Residue 187-190 (FSSR) coordinates ATP. Positions 277–510 (FLMKRKPIIA…LNIPKEIQLE (234 aa)) are cytidylate kinase.

The protein in the N-terminal section; belongs to the pantothenate synthetase family. This sequence in the C-terminal section; belongs to the cytidylate kinase family. Type 1 subfamily.

The protein localises to the cytoplasm. The catalysed reaction is (R)-pantoate + beta-alanine + ATP = (R)-pantothenate + AMP + diphosphate + H(+). It catalyses the reaction CMP + ATP = CDP + ADP. The enzyme catalyses dCMP + ATP = dCDP + ADP. It participates in cofactor biosynthesis; (R)-pantothenate biosynthesis; (R)-pantothenate from (R)-pantoate and beta-alanine: step 1/1. Functionally, catalyzes the condensation of pantoate with beta-alanine in an ATP-dependent reaction via a pantoyl-adenylate intermediate. In terms of biological role, catalyzes the transfer of a phosphate group from ATP to either CMP or dCMP to form CDP or dCDP and ADP, respectively. The polypeptide is Bifunctional pantoate ligase/cytidylate kinase (Prochlorococcus marinus subsp. pastoris (strain CCMP1986 / NIES-2087 / MED4)).